Consider the following 814-residue polypeptide: Rho GTPase-activating protein 44 (814 aa).

Residues 14–249 (QTVGRAEKTE…IKAQQEAWVE (236 aa)) form the BAR domain. The Rho-GAP domain occupies 255–445 (KPLEEHLMIS…PIIQHADWFF (191 aa)). Disordered stretches follow at residues 467 to 493 (ANYS…RPLS), 531 to 768 (SAGR…SMST), and 784 to 814 (STLR…STAL). The span at 479 to 489 (PADRRQPEQAR) shows a compositional bias: basic and acidic residues. A Phosphoserine modification is found at Ser493. 6 stretches are compositionally biased toward low complexity: residues 531–541 (SAGRKAACAPP), 567–581 (SPAT…SGAS), 598–612 (SPGS…SIQG), 622–637 (PQPA…DQSP), 684–704 (SPYG…LSPA), and 741–752 (SVSLSASSPQST). Positions 727 to 814 (KPRQRPTLPP…SEEESESTAL (88 aa)) are interaction with BST2. Residues 790-805 (PLEHARRHSVTDKRDS) are compositionally biased toward basic and acidic residues. Phosphoserine is present on Ser805. A PDZ-binding motif is present at residues 811–814 (STAL).

Interacts with BST2 (via cytoplasmic domain). Interacts (probably via PDZ-binding motif) with SHANK3 (via PDZ domain); the interaction takes place in dendritic spines and promotes GRIA1 exocytosis. As to expression, expressed in brain, detected at high levels in hippocampal CA1 (at protein level).

The protein localises to the cell projection. The protein resides in the dendritic spine. It is found in the recycling endosome. Its subcellular location is the presynapse. It localises to the dendrite. GTPase-activating protein (GAP) that stimulates the GTPase activity of Rho-type GTPases. Thereby, controls Rho-type GTPases cycling between their active GTP-bound and inactive GDP-bound states. Acts as a GAP at least for CDC42 and RAC1. In neurons, is involved in dendritic spine formation and synaptic plasticity in a specific RAC1-GAP activity. Limits the initiation of exploratory dendritic filopodia. Recruited to actin-patches that seed filopodia, binds specifically to plasma membrane sections that are deformed inward by acto-myosin mediated contractile forces. Acts through GAP activity on RAC1 to reduce actin polymerization necessary for filopodia formation. In association with SHANK3, promotes GRIA1 exocytosis from recycling endosomes and spine morphological changes associated to long-term potentiation. This is Rho GTPase-activating protein 44 from Rattus norvegicus (Rat).